A 258-amino-acid chain; its full sequence is Shikimate dehydrogenase (NADP(+)) (258 aa).

Residues 14-16 (SES) and T61 each bind shikimate. K65 (proton acceptor) is an active-site residue. N86 and D101 together coordinate shikimate. Residues 125–129 (GSGGS) and L211 contribute to the NADP(+) site. Y213 is a shikimate binding site. An NADP(+)-binding site is contributed by G234.

This sequence belongs to the shikimate dehydrogenase family. In terms of assembly, homodimer.

It carries out the reaction shikimate + NADP(+) = 3-dehydroshikimate + NADPH + H(+). The protein operates within metabolic intermediate biosynthesis; chorismate biosynthesis; chorismate from D-erythrose 4-phosphate and phosphoenolpyruvate: step 4/7. In terms of biological role, involved in the biosynthesis of the chorismate, which leads to the biosynthesis of aromatic amino acids. Catalyzes the reversible NADPH linked reduction of 3-dehydroshikimate (DHSA) to yield shikimate (SA). This Clostridium botulinum (strain Loch Maree / Type A3) protein is Shikimate dehydrogenase (NADP(+)).